Here is a 256-residue protein sequence, read N- to C-terminus: Isoprenyl transferase (256 aa).

Residue Asp33 is part of the active site. Residue Asp33 participates in Mg(2+) binding. Substrate contacts are provided by residues 34–37 (GNGR), Trp38, Arg46, His50, and 78–80 (STE). Asn81 acts as the Proton acceptor in catalysis. Residues Trp82, Arg84, Arg201, and 207–209 (RIS) each bind substrate. Glu220 serves as a coordination point for Mg(2+).

This sequence belongs to the UPP synthase family. Homodimer. Mg(2+) is required as a cofactor.

Catalyzes the condensation of isopentenyl diphosphate (IPP) with allylic pyrophosphates generating different type of terpenoids. This chain is Isoprenyl transferase, found in Staphylococcus haemolyticus (strain JCSC1435).